Reading from the N-terminus, the 116-residue chain is Nascent polypeptide-associated complex protein (116 aa).

Residues 6 to 70 (PKQMKDLERM…AREESKQQQK (65 aa)) form the NAC-A/B domain.

It belongs to the NAC-alpha family. In terms of assembly, homodimer. Interacts with the ribosome. Binds ribosomal RNA.

Its function is as follows. Contacts the emerging nascent chain on the ribosome. This Sulfolobus acidocaldarius (strain ATCC 33909 / DSM 639 / JCM 8929 / NBRC 15157 / NCIMB 11770) protein is Nascent polypeptide-associated complex protein.